Here is a 428-residue protein sequence, read N- to C-terminus: Protein Wnt-8b (428 aa).

Residues 1–22 form the signal peptide; it reads MFYTGSFWFIFFILPAIPFCHS. An intrachain disulfide couples C54 to C65. 2 N-linked (GlcNAc...) asparagine glycosylation sites follow: N123 and N176. Cystine bridges form between C177/C185, C187/C205, C253/C267, C255/C262, C329/C367, C345/C360, C364/C406, C382/C397, C384/C394, and C389/C390. Residue S259 is the site of O-palmitoleoyl serine attachment. N332 carries an N-linked (GlcNAc...) asparagine glycan.

Belongs to the Wnt family. In terms of processing, palmitoleoylation is required for efficient binding to frizzled receptors. Depalmitoleoylation leads to Wnt signaling pathway inhibition. Proteolytic processing by tiki1 and tiki2 promotes oxidation and formation of large disulfide-bond oligomers, leading to inactivation of wnt8b. As to expression, in adults, in brain.

The protein resides in the secreted. It is found in the extracellular space. The protein localises to the extracellular matrix. In terms of biological role, ligand for members of the frizzled family of seven transmembrane receptors. Plays a role in the initiation of dorsal axis development. May activate a Nieuwkoop center-like signaling pathway. The sequence is that of Protein Wnt-8b (wnt8b) from Xenopus laevis (African clawed frog).